Consider the following 136-residue polypeptide: Putative zinc finger protein 818 (136 aa).

The C2H2-type 1; degenerate zinc finger occupies 64 to 83; it reads NVCGKVLSQNSHLVNHQRIH. The C2H2-type 2 zinc finger occupies 89-111; that stretch reads YRCHECGKAFTQGSRFINHQIVH.

It belongs to the krueppel C2H2-type zinc-finger protein family.

The protein resides in the nucleus. Functionally, may be involved in transcriptional regulation. This is Putative zinc finger protein 818 (ZNF818P) from Homo sapiens (Human).